The sequence spans 132 residues: Small ribosomal subunit protein uS8 (132 aa).

Belongs to the universal ribosomal protein uS8 family. In terms of assembly, part of the 30S ribosomal subunit. Contacts proteins S5 and S12.

One of the primary rRNA binding proteins, it binds directly to 16S rRNA central domain where it helps coordinate assembly of the platform of the 30S subunit. The polypeptide is Small ribosomal subunit protein uS8 (Rickettsia typhi (strain ATCC VR-144 / Wilmington)).